We begin with the raw amino-acid sequence, 143 residues long: Nucleoside diphosphate kinase (143 aa).

The ATP site is built by lysine 11, phenylalanine 59, arginine 87, threonine 93, arginine 104, and asparagine 114. Residue histidine 117 is the Pros-phosphohistidine intermediate of the active site.

Belongs to the NDK family. Homotetramer. Mg(2+) serves as cofactor.

The protein localises to the cytoplasm. It carries out the reaction a 2'-deoxyribonucleoside 5'-diphosphate + ATP = a 2'-deoxyribonucleoside 5'-triphosphate + ADP. The catalysed reaction is a ribonucleoside 5'-diphosphate + ATP = a ribonucleoside 5'-triphosphate + ADP. Functionally, major role in the synthesis of nucleoside triphosphates other than ATP. The ATP gamma phosphate is transferred to the NDP beta phosphate via a ping-pong mechanism, using a phosphorylated active-site intermediate. The protein is Nucleoside diphosphate kinase of Citrobacter koseri (strain ATCC BAA-895 / CDC 4225-83 / SGSC4696).